The sequence spans 686 residues: ATP-dependent zinc metalloprotease FtsH 1 (686 aa).

Residues 1-33 (MCFCIVSSPEAMHSNADSPSSGPGLQPVWTTLR) are Cytoplasmic-facing. A helical transmembrane segment spans residues 34-54 (SPYVFWIGGAILLALLVHLGI). The Periplasmic portion of the chain corresponds to 55–164 (KWQQASAPVR…TFAATQESDW (110 aa)). Residues 165–185 (VGTLLLWGLPLGLIVGIWLFF) form a helical membrane-spanning segment. Over 186-686 (MRRMATGGRE…AEGASPSSQG (501 aa)) the chain is Cytoplasmic. 257-264 (GPPGTGKT) contacts ATP. His-479 contributes to the Zn(2+) binding site. Residue Glu-480 is part of the active site. His-483 and Asp-555 together coordinate Zn(2+). Residues 661–686 (YAWLKEGDGTSRNSASAEGASPSSQG) form a disordered region. The segment covering 670–686 (TSRNSASAEGASPSSQG) has biased composition (polar residues).

It in the central section; belongs to the AAA ATPase family. This sequence in the C-terminal section; belongs to the peptidase M41 family. Homohexamer. The cofactor is Zn(2+).

The protein localises to the cell inner membrane. Acts as a processive, ATP-dependent zinc metallopeptidase for both cytoplasmic and membrane proteins. Plays a role in the quality control of integral membrane proteins. This is ATP-dependent zinc metalloprotease FtsH 1 from Salinibacter ruber (strain M8).